Reading from the N-terminus, the 154-residue chain is Ribosomal RNA large subunit methyltransferase H (154 aa).

Position 102 (Gly102) interacts with S-adenosyl-L-methionine.

It belongs to the RNA methyltransferase RlmH family. Homodimer.

The protein localises to the cytoplasm. It catalyses the reaction pseudouridine(1915) in 23S rRNA + S-adenosyl-L-methionine = N(3)-methylpseudouridine(1915) in 23S rRNA + S-adenosyl-L-homocysteine + H(+). Functionally, specifically methylates the pseudouridine at position 1915 (m3Psi1915) in 23S rRNA. In Caulobacter sp. (strain K31), this protein is Ribosomal RNA large subunit methyltransferase H.